Here is a 306-residue protein sequence, read N- to C-terminus: D-alanine--D-alanine ligase (306 aa).

One can recognise an ATP-grasp domain in the interval 102-300 (KHVAKAAGIP…FGEFLRWMVE (199 aa)). 128–183 (PMKPPYVVKPVREGSSFGVVIVKEDQSHPPQVITSSEWRYGDRVMVERYIAGRELT) provides a ligand contact to ATP. Residues Asp-252, Glu-267, and Asn-269 each coordinate Mg(2+).

Belongs to the D-alanine--D-alanine ligase family. Mg(2+) serves as cofactor. Requires Mn(2+) as cofactor.

The protein localises to the cytoplasm. It catalyses the reaction 2 D-alanine + ATP = D-alanyl-D-alanine + ADP + phosphate + H(+). It functions in the pathway cell wall biogenesis; peptidoglycan biosynthesis. Functionally, cell wall formation. This is D-alanine--D-alanine ligase from Sinorhizobium fredii (strain NBRC 101917 / NGR234).